A 594-amino-acid polypeptide reads, in one-letter code: A-type ATP synthase subunit A (594 aa).

236–243 lines the ATP pocket; the sequence is GPFGSGKT.

The protein belongs to the ATPase alpha/beta chains family. Has multiple subunits with at least A(3), B(3), C, D, E, F, H, I and proteolipid K(x).

It is found in the cell membrane. It carries out the reaction ATP + H2O + 4 H(+)(in) = ADP + phosphate + 5 H(+)(out). Its function is as follows. Component of the A-type ATP synthase that produces ATP from ADP in the presence of a proton gradient across the membrane. The A chain is the catalytic subunit. The polypeptide is A-type ATP synthase subunit A (Pyrobaculum calidifontis (strain DSM 21063 / JCM 11548 / VA1)).